The sequence spans 575 residues: Arginine--tRNA ligase (575 aa).

The short motif at Pro122 to His132 is the 'HIGH' region element.

Belongs to the class-I aminoacyl-tRNA synthetase family. Monomer.

The protein localises to the cytoplasm. The enzyme catalyses tRNA(Arg) + L-arginine + ATP = L-arginyl-tRNA(Arg) + AMP + diphosphate. The polypeptide is Arginine--tRNA ligase (Actinobacillus succinogenes (strain ATCC 55618 / DSM 22257 / CCUG 43843 / 130Z)).